A 213-amino-acid chain; its full sequence is Reticulon-3 (213 aa).

The segment covering 1 to 16 (MADTSGPQSSHISSSA) has biased composition (polar residues). The disordered stretch occupies residues 1 to 20 (MADTSGPQSSHISSSAGEKG). The region spanning 25-213 (VQDLLYWRDV…LPGALKKKSE (189 aa)) is the Reticulon domain. The next 2 membrane-spanning stretches (helical) occupy residues 45–65 (MVLL…YLVL) and 154–174 (VFNG…APIV).

In terms of assembly, homodimer.

The protein resides in the endoplasmic reticulum membrane. The protein localises to the golgi apparatus membrane. May be involved in membrane trafficking in the early secretory pathway. This chain is Reticulon-3 (rtn3), found in Xenopus tropicalis (Western clawed frog).